A 294-amino-acid polypeptide reads, in one-letter code: Cyclin-G1 (294 aa).

It belongs to the cyclin family. Cyclin G subfamily.

Its subcellular location is the nucleus. May play a role in growth regulation. Is associated with G2/M phase arrest in response to DNA damage. May be an intermediate by which p53 mediates its role as an inhibitor of cellular proliferation. In Rattus norvegicus (Rat), this protein is Cyclin-G1 (Ccng1).